A 51-amino-acid polypeptide reads, in one-letter code: Large ribosomal subunit protein bL33 (51 aa).

The disordered stretch occupies residues 1 to 23; that stretch reads MRDKIKLESSAGTGHFYTTTKNK. A compositionally biased stretch (polar residues) spans 10–20; the sequence is SAGTGHFYTTT.

This sequence belongs to the bacterial ribosomal protein bL33 family.

The chain is Large ribosomal subunit protein bL33 from Chromobacterium violaceum (strain ATCC 12472 / DSM 30191 / JCM 1249 / CCUG 213 / NBRC 12614 / NCIMB 9131 / NCTC 9757 / MK).